A 103-amino-acid chain; its full sequence is Small ribosomal subunit protein uS10 (103 aa).

Belongs to the universal ribosomal protein uS10 family. As to quaternary structure, part of the 30S ribosomal subunit.

In terms of biological role, involved in the binding of tRNA to the ribosomes. The protein is Small ribosomal subunit protein uS10 of Alkalilimnicola ehrlichii (strain ATCC BAA-1101 / DSM 17681 / MLHE-1).